A 229-amino-acid polypeptide reads, in one-letter code: Octanoyltransferase (229 aa).

The 179-residue stretch at 47-225 (PSSPEAVWIL…SLAARFHLAW (179 aa)) folds into the BPL/LPL catalytic domain. Substrate-binding positions include 89 to 96 (RGGEVTHH), 156 to 158 (AIG), and 169 to 171 (GLA). Cys-187 serves as the catalytic Acyl-thioester intermediate.

Belongs to the LipB family.

Its subcellular location is the cytoplasm. It catalyses the reaction octanoyl-[ACP] + L-lysyl-[protein] = N(6)-octanoyl-L-lysyl-[protein] + holo-[ACP] + H(+). Its pathway is protein modification; protein lipoylation via endogenous pathway; protein N(6)-(lipoyl)lysine from octanoyl-[acyl-carrier-protein]: step 1/2. Its function is as follows. Catalyzes the transfer of endogenously produced octanoic acid from octanoyl-acyl-carrier-protein onto the lipoyl domains of lipoate-dependent enzymes. Lipoyl-ACP can also act as a substrate although octanoyl-ACP is likely to be the physiological substrate. The protein is Octanoyltransferase of Synechococcus sp. (strain CC9902).